We begin with the raw amino-acid sequence, 177 residues long: Glutamyl-tRNA(Gln) amidotransferase subunit F, mitochondrial (177 aa).

Residues Met-1–Phe-16 constitute a mitochondrion transit peptide. Residues Pro-148–Gly-177 form a disordered region. Over residues Thr-153–Pro-164 the composition is skewed to polar residues.

Belongs to the GatF family. As to quaternary structure, subunit of the heterotrimeric GatFAB amidotransferase (AdT) complex, composed of A, B and F subunits.

The protein localises to the mitochondrion inner membrane. It carries out the reaction L-glutamyl-tRNA(Gln) + L-glutamine + ATP + H2O = L-glutaminyl-tRNA(Gln) + L-glutamate + ADP + phosphate + H(+). In terms of biological role, allows the formation of correctly charged Gln-tRNA(Gln) through the transamidation of misacylated Glu-tRNA(Gln) in the mitochondria. The reaction takes place in the presence of glutamine and ATP through an activated gamma-phospho-Glu-tRNA(Gln). Required for proper protein synthesis within the mitochondrion. The polypeptide is Glutamyl-tRNA(Gln) amidotransferase subunit F, mitochondrial (Scheffersomyces stipitis (strain ATCC 58785 / CBS 6054 / NBRC 10063 / NRRL Y-11545) (Yeast)).